The sequence spans 105 residues: Thioredoxin (105 aa).

One can recognise a Thioredoxin domain in the interval 1 to 105 (MASNVTDKSF…SLIEWINNNI (105 aa)). A disulfide bridge connects residues Cys-30 and Cys-33.

This sequence belongs to the thioredoxin family.

In terms of biological role, component of the thioredoxin-thioredoxin reductase system. Participates in various redox reactions through the reversible oxidation of its active center dithiol to a disulfide and catalyzes dithiol-disulfide exchange reactions. This is Thioredoxin (trxA) from Rickettsia bellii (strain RML369-C).